The chain runs to 1086 residues: MPVPSHVSVATLQSVLQTVCSTGEPAIIAPSSFLGELDTVVDEVKRHGMKLASIPHGGITILPPVPISGTELFDFCAEYCKAQTHEERLAVRHKINNHNFLMQDPLLRMPCRQLYNPADYVLRIVHLCSELVSASEEEYHGAYGVAPLLHINPVQDVCGKLRSMFQSGSLYVKPWILEEEEERREMDESNRGVLFNSDSFGNGRGGSSISSSERSVDENDVADEDLTGEEVVDNATDTVVEYLSEKDFDVVTESGIFYDDSGERVHAIYLRGGIKKELCQRAAIAIEEAATTKNLRKAVNGGKTNPETGIVGYYDYLNNPTQRKCRETEFTRKNWSSVVDSCEPFLVALNKLYSECAPTHYKLQRIAIPHHYQLFNTVFSTMTVNRNFRTAVHTDRGDFRSGLAALCVIDGVFEGCHLAIKKLGKAFRLETGDVLFFDTSLEHGNTEVHNFDYCWKRVSVVCYLRNGLMSQICEMERRRWLQKQMLKQRLLDRSRQSVINLNATDPNLPPIYLPGRLLEVLSPVQQAALGFVVDRLSKGNGCVIALTMGLGKTLLSLALCYSHMYDQNPRDVLILAPKIVLTHWTGEKQKWEKYGLVFSHFVVSDGTDSVSFEIALKRYKQQLNGELPRTSHVFVINPEYIRTVLKKLTGFRPSLIIVDEGHRVSSKGSKLKDWLEGLRCTARVILSGTPVQNNAEELYRLIGWINSDVHSVLPPRVFTDLAGTINRYINGDDSALAAAVSAQRYIQEWMCSYVFSVMKTDLPPLNDYIIICGFSSIQRKMLEDHFGMEGIDGLTSIKASEHRPYHLSTHPLCFLGFISGVYKSLNGNHKLTPEAEEELESQEYASQLYSLTEDDIGLIDECLSLVNSGFLTEFVGLSGKMTVLISILHSIREKKEKAIIFSQYVGSQDFISRTLTSFDIVSSTIRGRDCHERRRRTIEKFREDEKITCLLLSTQIGAYGLDFTAANHVILWDSWWNPQVESQAIARAYRRNQTRAVIVYRLASEFEDTIVLKTQIRKLALFRCIMNEEASRAVPPEELLDCVDTEEDEGRRFLWRSLKKSYLEGGAPAVSKVFRHGDTVRSESWS.

Residues 1–518 (MPVPSHVSVA…PPIYLPGRLL (518 aa)) are thymine dioxygenase. A disordered region spans residues 187–220 (DESNRGVLFNSDSFGNGRGGSSISSSERSVDEND). Residues H393, D395, and H443 each coordinate Fe cation. R457 is a 2-oxoglutarate binding site. Residues 519–1084 (EVLSPVQQAA…RHGDTVRSES (566 aa)) are DNA Helicase. In terms of domain architecture, Helicase ATP-binding spans 533–708 (VDRLSKGNGC…YRLIGWINSD (176 aa)). 546-553 (LTMGLGKT) serves as a coordination point for ATP. The DEAH box motif lies at 659 to 662 (DEGH). One can recognise a Helicase C-terminal domain in the interval 883 to 1041 (VLISILHSIR…RAVPPEELLD (159 aa)).

This sequence in the C-terminal section; belongs to the SNF2/RAD54 helicase family. It in the N-terminal section; belongs to the TET family. JBP2 subfamily. Fe(2+) serves as cofactor.

The protein localises to the nucleus. The catalysed reaction is ATP + H2O = ADP + phosphate + H(+). It catalyses the reaction thymine + 2-oxoglutarate + O2 = 5-hydroxymethyluracil + succinate + CO2. In terms of biological role, dioxygenase that catalyzes the first step of DNA base J (beta-d-glucosyl-HOMedU) biosynthesis by converting thymine to 5-hydroxymethyluracil (HOMedU). DNA base J is a hypermodified thymidine residue found in the genome of kinetoplastid parasites, which is localized primarily to repetitive DNA, namely the telomeres, and is implicated in the regulation of antigenic variation. Probably also acts as a DNA helicase. Recognizes and binds specific regions of the genome, hydrolyzes ATP and allows the DNA base J de novo synthesis. Involved in initial synthesis of DNA base J, JBP1 being able to act via the basal level of DNA base J and propagate further synthesis. In contrast to JBP1, it does not specifically bind DNA base J, however it binds chromatin. This Trypanosoma cruzi (strain CL Brener) protein is Bifunctional helicase and thymine dioxygenase JBP2 (JBP2).